A 120-amino-acid polypeptide reads, in one-letter code: uncharacterized protein (120 aa).

It to M.jannaschii MJ1503.

This is an uncharacterized protein from Methanocaldococcus jannaschii (strain ATCC 43067 / DSM 2661 / JAL-1 / JCM 10045 / NBRC 100440) (Methanococcus jannaschii).